Reading from the N-terminus, the 1308-residue chain is Spermatogenesis-associated protein 31F1B (1308 aa).

A helical transmembrane segment spans residues 7–27 (FLWDTECPLYVYFCFFIIVLI). Disordered regions lie at residues 464-488 (SPPI…LDEP), 627-648 (SQPG…AGKG), 844-863 (HGAQ…QPLL), 902-927 (PTAT…LLQG), 1005-1026 (FSTE…VAGK), 1084-1190 (GACP…AGLK), and 1204-1254 (MKSK…PKAQ). Pro residues predominate over residues 465-478 (PPIPLPEAAPPPSS). The span at 1107 to 1117 (METDSEQDMED) shows a compositional bias: acidic residues.

It belongs to the SPATA31 family.

It is found in the membrane. This Mus musculus (Mouse) protein is Spermatogenesis-associated protein 31F1B.